Consider the following 242-residue polypeptide: Probable transcriptional regulatory protein STH1004 (242 aa).

This sequence belongs to the TACO1 family.

Its subcellular location is the cytoplasm. This chain is Probable transcriptional regulatory protein STH1004, found in Symbiobacterium thermophilum (strain DSM 24528 / JCM 14929 / IAM 14863 / T).